We begin with the raw amino-acid sequence, 356 residues long: uncharacterized protein (356 aa).

The next 3 helical transmembrane spans lie at 258–275, 290–312, and 325–347; these read SALQ…VFYY, PHWL…TEAL, and LVLL…TLFS.

The protein localises to the cell membrane. This is an uncharacterized protein from Archaeoglobus fulgidus (strain ATCC 49558 / DSM 4304 / JCM 9628 / NBRC 100126 / VC-16).